The following is a 156-amino-acid chain: Cell division protein SepF (156 aa).

Basic and acidic residues predominate over residues 20–36 (AQYGYEKEQTDMKKQQD). The tract at residues 20–50 (AQYGYEKEQTDMKKQQDPPEQQDVTFPKAQP) is disordered.

The protein belongs to the SepF family. As to quaternary structure, homodimer. Interacts with FtsZ.

The protein resides in the cytoplasm. Its function is as follows. Cell division protein that is part of the divisome complex and is recruited early to the Z-ring. Probably stimulates Z-ring formation, perhaps through the cross-linking of FtsZ protofilaments. Its function overlaps with FtsA. In Bacillus cereus (strain G9842), this protein is Cell division protein SepF.